Here is a 1883-residue protein sequence, read N- to C-terminus: Transmembrane protein 131 (1883 aa).

The signal sequence occupies residues 1–22 (MGKRAGGGATGATTAAVSTSAG). The Lumenal portion of the chain corresponds to 23–1117 (AGLEPAAARS…AEALPRPNWE (1095 aa)). The interval 109–283 (RFEPPMLDFH…ETKGVMRASF (175 aa)) is papD-L domain. Asn300 carries N-linked (GlcNAc...) asparagine glycosylation. Position 803 is a phosphoserine (Ser803). Residues 1118–1138 (LALYIIISGIMSALFLLVIGT) form a helical membrane-spanning segment. The Cytoplasmic segment spans residues 1139–1883 (AYLEAQGIWE…WSNSHFPHEN (745 aa)). Disordered regions lie at residues 1198-1580 (GAGG…DSLY), 1593-1656 (LKQR…KNGN), 1670-1712 (PGGN…PVSN), 1766-1789 (WESPATDPSPSWPASSGSPTHTAT), and 1832-1858 (MGTENSPAPHAPSTSSPADDLGQTYNP). Residues 1237–1261 (AKNSSSTSSRTSAQAASSQSANKTS) are compositionally biased toward low complexity. Positions 1302–1316 (PQPPLPPPVPQPQEP) are enriched in pro residues. Ser1322 and Ser1342 each carry phosphoserine. Basic and acidic residues-rich tracts occupy residues 1330-1343 (SHPERASSARHSSE) and 1353-1364 (AMDKDFDHHDSP). Residue Ser1375 is modified to Phosphoserine. A compositionally biased stretch (basic residues) spans 1380 to 1394 (SKGKGKPLQRKVKPP). Over residues 1395–1417 (KKQEEKEKKGKGKPQEDELKDSL) the composition is skewed to basic and acidic residues. Residues 1423–1434 (SSTTTETSNPDT) show a composition bias toward low complexity. Over residues 1436 to 1458 (PLLKEDTEKQKGKQAMPEKHESE) the composition is skewed to basic and acidic residues. 2 stretches are compositionally biased toward polar residues: residues 1510-1526 (AMTSGSKSRNAQKTKGT) and 1542-1553 (PNSQELGNTSSS). Pro residues predominate over residues 1602–1611 (PASPSPPAAP). The segment covering 1619–1630 (SYSSIVNSSSSS) has biased composition (low complexity). The span at 1678–1690 (VSSNKTGFSSSLG) shows a compositional bias: polar residues. Low complexity-rich tracts occupy residues 1773-1784 (PSPSWPASSGSP) and 1837-1849 (SPAPHAPSTSSPA). Ser1863 and Ser1871 each carry phosphoserine.

It belongs to the TMEM131 family. As to quaternary structure, interacts (via PapD-L domain) with COL1A2 (via C-terminus); the interaction is direct, may occur with other collagen proteins, and is involved in assembly and TRAPPIII ER-to-Golgi transport complex-dependent secretion of collagen. Interacts (via C-terminus) with TRAPPC8 (via C-terminus); the interaction is direct.

It is found in the membrane. Collagen binding transmembrane protein involved in collagen secretion by recruiting the ER-to-Golgi transport complex TRAPPIII. May play a role in the immune response to viral infection. This is Transmembrane protein 131 from Homo sapiens (Human).